Reading from the N-terminus, the 468-residue chain is Zinc-regulated transporter 1 (468 aa).

The signal sequence occupies residues 1-17; sequence MKFTHLFFIGLLTKVYT. Over 18–185 the chain is Extracellular; sequence ETVTVLSTRS…VKRDYDIPLR (168 aa). N-linked (GlcNAc...) asparagine glycosylation is found at asparagine 57 and asparagine 67. A helical transmembrane segment spans residues 186–206; sequence IGLLFVILVTSGIGSFGPIVL. The Cytoplasmic segment spans residues 207–217; the sequence is KQFVNLSQENY. Residues 218–238 traverse the membrane as a helical segment; the sequence is IIVIIKQFGTGIIISTAFVHL. Residues 239-257 are Extracellular-facing; that stretch reads MTHAQLMWSNSCLKIKYEG. Residues 258–278 traverse the membrane as a helical segment; it reads TGASITMAGIFIAFIIEYIAL. The Cytoplasmic portion of the chain corresponds to 279–314; that stretch reads RIVNARDTGKVDKKEIEETSSNEQSLHGISVNDKIS. Residues 315-335 form a helical membrane-spanning segment; it reads VMILEAGIIFHSILIGITLVV. Residues 336-338 are Extracellular-facing; that stretch reads TDD. The chain crosses the membrane as a helical span at residues 339–359; it reads VYFITLFIVIVFHQFFEGLAL. At 360–374 the chain is on the cytoplasmic side; sequence SSRIISITNASLSTK. The helical transmembrane segment at 375–395 threads the bilayer; that stretch reads LVMALMFALITPIGMAIGIGV. At 396–406 the chain is on the extracellular side; that stretch reads LNKFNGNDPST. Residues 407 to 427 form a helical membrane-spanning segment; sequence LIALGTLDSFSAGVLLWTGLI. Residues 428–447 lie on the Cytoplasmic side of the membrane; that stretch reads EMWSHDWLHGHLRNSSFVKT. Residues 448-468 traverse the membrane as a helical segment; it reads TVALVSLILGMLLMSLLGNWA.

Belongs to the ZIP transporter (TC 2.A.5) family.

It localises to the cell membrane. The enzyme catalyses Zn(2+)(in) = Zn(2+)(out). Its function is as follows. Zinc transporter that acts with PRA1 in sequestration of zinc from host tissues during infection. The pH-regulated antigen 1 (PRA1) binds zinc from its environment and then reassociates with ZRT1 to acquire this essential metal. In Candida albicans (strain SC5314 / ATCC MYA-2876) (Yeast), this protein is Zinc-regulated transporter 1 (ZRT101).